Reading from the N-terminus, the 376-residue chain is Homeobox protein extradenticle (376 aa).

Positions 1 to 37 are disordered; that stretch reads MEDPNRMLAHTGGMMAPQGYGLSGQDDGQNAGSENEV. Residues 38-237 form the PBC domain; it reads RKQKDIGEIL…VMILRSRFLD (200 aa). The tract at residues 45–124 is PBC-A; that stretch reads EILQQIMSIS…EGVAGPEKGG (80 aa). Positions 127–237 are PBC-B; it reads AAAASAAAAS…VMILRSRFLD (111 aa). Residues 238–300 constitute a DNA-binding region (homeobox; TALE-type); the sequence is ARRKRRNFSK…NKRIRYKKNI (63 aa). Residues 318–335 are compositionally biased toward low complexity; the sequence is ASPYSMAGPPSGTTTPMM. The interval 318-376 is disordered; it reads ASPYSMAGPPSGTTTPMMSPAPPQDSMGYPMGSGGYDQQQPYDNSMGGYDPNLHQDLSP.

This sequence belongs to the TALE/PBX homeobox family. In terms of assembly, interacts with Ubx and hth. In terms of tissue distribution, prior to full germband retraction it is ubiquitously present, after germband retraction, mostly present in the anterior portion of the ventral nerve cord.

It localises to the nucleus. Transcription factor which acts with the selector homeodomain proteins altering the regulation of downstream target genes such as wingless (wg), teashirt (tsh) and decapentaplegic (dpp), thus affecting segmental identity. Delimits the eye field and prevent inappropriate eye development. Required for proper localization of chordotonal organs within the peripheral nervous system. The sequence is that of Homeobox protein extradenticle (exd) from Drosophila melanogaster (Fruit fly).